Reading from the N-terminus, the 382-residue chain is Cytochrome b (382 aa).

A run of 4 helical transmembrane segments spans residues 36-56 (FGSL…FLTM), 80-101 (WLIR…YLHI), 116-136 (WFIG…GYVL), and 181-201 (FYTF…IHLL). Positions 86 and 100 each coordinate heme b. 2 residues coordinate heme b: H185 and H199. H204 lines the a ubiquinone pocket. The next 4 helical transmembrane spans lie at 229-249 (YKDL…TLSN), 291-311 (LGGV…PLTF), 323-343 (INQF…WIGA), and 350-370 (YIIT…LNPL).

Belongs to the cytochrome b family. The main subunits of complex b-c1 are: cytochrome b, cytochrome c1 and the Rieske protein. Heme b serves as cofactor.

The protein localises to the mitochondrion inner membrane. In terms of biological role, component of the ubiquinol-cytochrome c reductase complex (complex III or cytochrome b-c1 complex) that is part of the mitochondrial respiratory chain. The b-c1 complex mediates electron transfer from ubiquinol to cytochrome c. Contributes to the generation of a proton gradient across the mitochondrial membrane that is then used for ATP synthesis. The protein is Cytochrome b (MT-CYB) of Samia ricini (Indian eri silkmoth).